A 462-amino-acid chain; its full sequence is Argininosuccinate lyase (462 aa).

The protein belongs to the lyase 1 family. Argininosuccinate lyase subfamily.

The protein localises to the cytoplasm. The catalysed reaction is 2-(N(omega)-L-arginino)succinate = fumarate + L-arginine. The protein operates within amino-acid biosynthesis; L-arginine biosynthesis; L-arginine from L-ornithine and carbamoyl phosphate: step 3/3. The polypeptide is Argininosuccinate lyase (Nitratiruptor sp. (strain SB155-2)).